The sequence spans 727 residues: Polyribonucleotide nucleotidyltransferase (727 aa).

Residues D488 and D494 each contribute to the Mg(2+) site. A KH domain is found at 555–614 (PKLYTMKINPEKIRDVIGKGGATIRALTDETGCQINIEEDGTITIAATEAAKADEAKRRI). The 69-residue stretch at 624–692 (GKVYEGPVTK…DKGRVKLSMK (69 aa)) folds into the S1 motif domain. The disordered stretch occupies residues 691 to 727 (MKALADRPAGDSGRPAPAERGERRERRDGGASEQQQQ). Positions 707-720 (PAERGERRERRDGG) are enriched in basic and acidic residues.

Belongs to the polyribonucleotide nucleotidyltransferase family. It depends on Mg(2+) as a cofactor.

The protein resides in the cytoplasm. It catalyses the reaction RNA(n+1) + phosphate = RNA(n) + a ribonucleoside 5'-diphosphate. In terms of biological role, involved in mRNA degradation. Catalyzes the phosphorolysis of single-stranded polyribonucleotides processively in the 3'- to 5'-direction. This chain is Polyribonucleotide nucleotidyltransferase, found in Acidovorax ebreus (strain TPSY) (Diaphorobacter sp. (strain TPSY)).